Consider the following 69-residue polypeptide: Putative membrane protein insertion efficiency factor (69 aa).

This sequence belongs to the UPF0161 family.

It localises to the cell membrane. Could be involved in insertion of integral membrane proteins into the membrane. The polypeptide is Putative membrane protein insertion efficiency factor (Desulfitobacterium hafniense (strain Y51)).